The following is a 654-amino-acid chain: Bifunctional 3'-phosphoadenosine 5'-phosphosulfate synthase pps-1 (654 aa).

The disordered stretch occupies residues 1–26 (MLTPRDENNEGDAMPMLKKPRYSSLS). Positions 1–231 (MLTPRDENNE…VLDHLESKGL (231 aa)) are adenylyl-sulfate kinase. 66–71 (GAGKTT) is an ATP binding site. Adenosine 5'-phosphosulfate is bound by residues 93–96 (DNIR), F105, 110–113 (RQEN), 136–137 (IS), K175, and 190–191 (GF). ATP contacts are provided by residues C218, 449-452 (QLRN), 550-554 (GRDPA), and A592. The segment at 242 to 653 (VRELFVSDDL…AGYYKSLQNS (412 aa)) is sulfate adenylyltransferase.

It in the N-terminal section; belongs to the APS kinase family. In the C-terminal section; belongs to the sulfate adenylyltransferase family.

The protein resides in the nucleus. The enzyme catalyses sulfate + ATP + H(+) = adenosine 5'-phosphosulfate + diphosphate. It carries out the reaction adenosine 5'-phosphosulfate + ATP = 3'-phosphoadenylyl sulfate + ADP + H(+). Its pathway is sulfur metabolism; sulfate assimilation. Bifunctional enzyme with both ATP sulfurylase and APS kinase activity, which mediates two steps in the sulfate activation pathway. The first step is the transfer of a sulfate group to ATP to yield adenosine 5'-phosphosulfate (APS), and the second step is the transfer of a phosphate group from ATP to APS yielding 3'-phosphoadenylylsulfate (PAPS: activated sulfate donor used by sulfotransferase). Required for normal growth and development. Involved in several aspects of both embryonic and postembryonic development, including molting, changes in cell shape, and patterning of epithelial and muscle cells. The protein is Bifunctional 3'-phosphoadenosine 5'-phosphosulfate synthase pps-1 of Caenorhabditis elegans.